We begin with the raw amino-acid sequence, 932 residues long: Serine/threonine-protein kinase PknD (932 aa).

Residues Tyr-4–Leu-291 form the Protein kinase domain. ATP is bound by residues Ile-10–Val-18 and Lys-33. Catalysis depends on Asp-138, which acts as the Proton acceptor.

The protein belongs to the protein kinase superfamily. Ser/Thr protein kinase family. Post-translationally, autophosphorylated on serine and threonine residues.

The catalysed reaction is L-seryl-[protein] + ATP = O-phospho-L-seryl-[protein] + ADP + H(+). The enzyme catalyses L-threonyl-[protein] + ATP = O-phospho-L-threonyl-[protein] + ADP + H(+). Functionally, together with the serine/threonine kinase Pkn1, may play a role in the specific interactions with host proteins during intracellular growth. In Chlamydia pneumoniae (Chlamydophila pneumoniae), this protein is Serine/threonine-protein kinase PknD.